Reading from the N-terminus, the 207-residue chain is Probable molybdenum cofactor guanylyltransferase (207 aa).

GTP is bound by residues 9-11 (LAG), Lys21, and Asp97. Asp97 is a Mg(2+) binding site.

Belongs to the MobA family. The cofactor is Mg(2+).

Its subcellular location is the cytoplasm. The catalysed reaction is Mo-molybdopterin + GTP + H(+) = Mo-molybdopterin guanine dinucleotide + diphosphate. In terms of biological role, transfers a GMP moiety from GTP to Mo-molybdopterin (Mo-MPT) cofactor (Moco or molybdenum cofactor) to form Mo-molybdopterin guanine dinucleotide (Mo-MGD) cofactor. This Nostoc sp. (strain PCC 7120 / SAG 25.82 / UTEX 2576) protein is Probable molybdenum cofactor guanylyltransferase.